Consider the following 452-residue polypeptide: Bifunctional protein GlmU (452 aa).

A pyrophosphorylase region spans residues 1 to 226 (MNFSAVILAA…PIEVEGVNDR (226 aa)). UDP-N-acetyl-alpha-D-glucosamine contacts are provided by residues 8-11 (LAAG), lysine 22, glutamine 73, 78-79 (GT), 100-102 (YGD), glycine 137, glutamate 151, asparagine 166, and asparagine 224. Residue aspartate 102 participates in Mg(2+) binding. Asparagine 224 serves as a coordination point for Mg(2+). Residues 227 to 247 (AQLARLERAYQAAQAQKLLEQ) are linker. The interval 248–452 (GVMLRDPSRF…IANWQRPTKK (205 aa)) is N-acetyltransferase. UDP-N-acetyl-alpha-D-glucosamine-binding residues include arginine 330 and lysine 348. Histidine 360 functions as the Proton acceptor in the catalytic mechanism. Positions 363 and 374 each coordinate UDP-N-acetyl-alpha-D-glucosamine. Acetyl-CoA contacts are provided by residues alanine 377, 383 to 384 (NY), serine 402, alanine 420, and arginine 437.

This sequence in the N-terminal section; belongs to the N-acetylglucosamine-1-phosphate uridyltransferase family. The protein in the C-terminal section; belongs to the transferase hexapeptide repeat family. Homotrimer. Requires Mg(2+) as cofactor.

It localises to the cytoplasm. The enzyme catalyses alpha-D-glucosamine 1-phosphate + acetyl-CoA = N-acetyl-alpha-D-glucosamine 1-phosphate + CoA + H(+). The catalysed reaction is N-acetyl-alpha-D-glucosamine 1-phosphate + UTP + H(+) = UDP-N-acetyl-alpha-D-glucosamine + diphosphate. It participates in nucleotide-sugar biosynthesis; UDP-N-acetyl-alpha-D-glucosamine biosynthesis; N-acetyl-alpha-D-glucosamine 1-phosphate from alpha-D-glucosamine 6-phosphate (route II): step 2/2. It functions in the pathway nucleotide-sugar biosynthesis; UDP-N-acetyl-alpha-D-glucosamine biosynthesis; UDP-N-acetyl-alpha-D-glucosamine from N-acetyl-alpha-D-glucosamine 1-phosphate: step 1/1. Its pathway is bacterial outer membrane biogenesis; LPS lipid A biosynthesis. In terms of biological role, catalyzes the last two sequential reactions in the de novo biosynthetic pathway for UDP-N-acetylglucosamine (UDP-GlcNAc). The C-terminal domain catalyzes the transfer of acetyl group from acetyl coenzyme A to glucosamine-1-phosphate (GlcN-1-P) to produce N-acetylglucosamine-1-phosphate (GlcNAc-1-P), which is converted into UDP-GlcNAc by the transfer of uridine 5-monophosphate (from uridine 5-triphosphate), a reaction catalyzed by the N-terminal domain. In Aliivibrio fischeri (strain ATCC 700601 / ES114) (Vibrio fischeri), this protein is Bifunctional protein GlmU.